Here is a 461-residue protein sequence, read N- to C-terminus: Transcription factor GTE3, chloroplastic (461 aa).

Positions 1–11 (MASGPIAGGGV) are enriched in gly residues. The disordered stretch occupies residues 1 to 41 (MASGPIAGGGVSKTKHKWSDSGNKSQKRSKPTVANSNSLGL). The transit peptide at 1-51 (MASGPIAGGGVSKTKHKWSDSGNKSQKRSKPTVANSNSLGLEDNHQMMKIS) directs the protein to the chloroplast. A Bromo domain is found at 114–220 (KGTVQILKSC…NLFEEKWVPL (107 aa)). One can recognise an NET domain in the interval 298–379 (LVEEASANRD…EYKESLSKKK (82 aa)). The segment covering 376-392 (SKKKEEQGLDSERDAES) has biased composition (basic and acidic residues). A disordered region spans residues 376-461 (SKKKEEQGLD…SSGHESDTGN (86 aa)). Residues 393–412 (FHNSVHESNTLVTGLESSKV) show a composition bias toward polar residues. Low complexity predominate over residues 429–451 (GGSSSSNSSSSGSGSGSSGSDSD). The segment covering 452-461 (SSGHESDTGN) has biased composition (basic and acidic residues).

In terms of assembly, interacts with SIZ1 (via PHD domain). In terms of processing, sumoylated by SIZ1. Sumoylation reduces capacity to bind to acetylated histone H3.

The protein localises to the plastid. The protein resides in the chloroplast. Functionally, probable transcription factor that binds to acetylated histone H3. The protein is Transcription factor GTE3, chloroplastic (GTE3) of Arabidopsis thaliana (Mouse-ear cress).